Consider the following 160-residue polypeptide: Cytochrome b6-f complex subunit 4 (160 aa).

The next 3 helical transmembrane spans lie at 36-56 (LLYIFPVVILGTIACTVGLAV), 95-115 (LLGVLLMAAVPAGLLTVPFLE), and 131-151 (TVFLIGTVVSIWLGIGAALPI).

It belongs to the cytochrome b family. PetD subfamily. In terms of assembly, the 4 large subunits of the cytochrome b6-f complex are cytochrome b6, subunit IV (17 kDa polypeptide, petD), cytochrome f and the Rieske protein, while the 4 small subunits are petG, petL, petM and petN. The complex functions as a dimer.

The protein localises to the plastid. Its subcellular location is the chloroplast thylakoid membrane. Its function is as follows. Component of the cytochrome b6-f complex, which mediates electron transfer between photosystem II (PSII) and photosystem I (PSI), cyclic electron flow around PSI, and state transitions. The protein is Cytochrome b6-f complex subunit 4 of Physcomitrium patens (Spreading-leaved earth moss).